The sequence spans 208 residues: Ribosomal RNA small subunit methyltransferase G (208 aa).

Residues glycine 76, leucine 81, 127–128 (VE), and arginine 142 each bind S-adenosyl-L-methionine.

This sequence belongs to the methyltransferase superfamily. RNA methyltransferase RsmG family.

It localises to the cytoplasm. The catalysed reaction is guanosine(527) in 16S rRNA + S-adenosyl-L-methionine = N(7)-methylguanosine(527) in 16S rRNA + S-adenosyl-L-homocysteine. In terms of biological role, specifically methylates the N7 position of guanine in position 527 of 16S rRNA. The sequence is that of Ribosomal RNA small subunit methyltransferase G from Legionella pneumophila (strain Corby).